We begin with the raw amino-acid sequence, 158 residues long: Transcription elongation factor GreA (158 aa).

The protein belongs to the GreA/GreB family.

Necessary for efficient RNA polymerase transcription elongation past template-encoded arresting sites. The arresting sites in DNA have the property of trapping a certain fraction of elongating RNA polymerases that pass through, resulting in locked ternary complexes. Cleavage of the nascent transcript by cleavage factors such as GreA or GreB allows the resumption of elongation from the new 3'terminus. GreA releases sequences of 2 to 3 nucleotides. This is Transcription elongation factor GreA from Rhizobium etli (strain ATCC 51251 / DSM 11541 / JCM 21823 / NBRC 15573 / CFN 42).